A 494-amino-acid chain; its full sequence is MARQQGWFALLIALVISAFLLCINLPFQLGLDLRGGSQLTLEVQALNPNEQIKSEQLEAVQSVLDRRVNGLGVAESSLRTIGTNQLILELPGEQEPSKAARVLGKTALLEFRKQKINTKSEMQRLQRIRSQVNNIDLYKKASKDNKSELIENKKIGEQVNDLRVALGLANSSLNEHDQIDQIRQKVNSEIVELFEPSSLTGSDLVSAGRRQEQNLTSWEVTLAFNQDGGEKFASLTKSIAGSDRLLGIILDGESISEASVGEQFKVAGITGGSATISGNFTAESARELEVQLRGGSLPLPVSIVQVRTIGPTLGVDNIRRSLIAALLGLSLVAIFMVSFYRLAGFIAIFALSFYALFNIAIYALIPVTLTLPGVAGFVLSIGMAVDANVLIFERVKDELRRGNTLIRSIETGFSQAFSSIIDGHITTLISCISLFYLGTGFVKGFAATLGIGVFISLFTALSCTRVLLRFFMSYKSLRKTTNFLSENQLPKQLT.

The next 6 membrane-spanning stretches (helical) occupy residues 7–27 (WFAL…NLPF), 322–342 (LIAA…FYRL), 345–365 (FIAI…YALI), 372–392 (PGVA…VLIF), 420–440 (IIDG…LGTG), and 441–461 (FVKG…FTAL).

This sequence belongs to the SecD/SecF family. SecD subfamily. As to quaternary structure, forms a complex with SecF. Part of the essential Sec protein translocation apparatus which comprises SecA, SecYEG and auxiliary proteins SecDF. Other proteins may also be involved.

The protein localises to the cell inner membrane. Its function is as follows. Part of the Sec protein translocase complex. Interacts with the SecYEG preprotein conducting channel. SecDF uses the proton motive force (PMF) to complete protein translocation after the ATP-dependent function of SecA. Probably participates in protein translocation into and across both the cytoplasmic and thylakoid membranes in cyanobacterial cells. The polypeptide is Protein translocase subunit SecD (Prochlorococcus marinus (strain SARG / CCMP1375 / SS120)).